The following is a 234-amino-acid chain: Large ribosomal subunit protein uL1 (234 aa).

This sequence belongs to the universal ribosomal protein uL1 family. As to quaternary structure, part of the 50S ribosomal subunit.

Its function is as follows. Binds directly to 23S rRNA. The L1 stalk is quite mobile in the ribosome, and is involved in E site tRNA release. Functionally, protein L1 is also a translational repressor protein, it controls the translation of the L11 operon by binding to its mRNA. This is Large ribosomal subunit protein uL1 from Anaeromyxobacter dehalogenans (strain 2CP-C).